We begin with the raw amino-acid sequence, 430 residues long: 3-phosphoshikimate 1-carboxyvinyltransferase (430 aa).

Positions 23, 24, and 28 each coordinate 3-phosphoshikimate. Phosphoenolpyruvate is bound at residue Lys23. The phosphoenolpyruvate site is built by Gly95 and Arg123. 3-phosphoshikimate-binding residues include Ser169, Gln171, Asp315, and Lys342. Gln171 contributes to the phosphoenolpyruvate binding site. Asp315 acts as the Proton acceptor in catalysis. Phosphoenolpyruvate-binding residues include Arg346 and Arg388.

It belongs to the EPSP synthase family. In terms of assembly, monomer.

It localises to the cytoplasm. The enzyme catalyses 3-phosphoshikimate + phosphoenolpyruvate = 5-O-(1-carboxyvinyl)-3-phosphoshikimate + phosphate. It participates in metabolic intermediate biosynthesis; chorismate biosynthesis; chorismate from D-erythrose 4-phosphate and phosphoenolpyruvate: step 6/7. Catalyzes the transfer of the enolpyruvyl moiety of phosphoenolpyruvate (PEP) to the 5-hydroxyl of shikimate-3-phosphate (S3P) to produce enolpyruvyl shikimate-3-phosphate and inorganic phosphate. The protein is 3-phosphoshikimate 1-carboxyvinyltransferase of Streptococcus pyogenes serotype M1.